The following is a 334-amino-acid chain: MLNTLIVGASGYAGAELVSYVNRHPHMTITALTVSAQSNDAGKLISDLHPQLKGIVDLPLQPMSDVRDFSADVDVVFLATAHEVSHDLAPQFLQAGCVVFDLSGAFRVNDRAFYEKYYGFTHQYPELLEQAVYGLAEWNADKLNTANLIAVPGCYPTAAQLSLKPLIDGGLLDLTQWPVINATSGVSGAGRKAAISNSFCEVSLQPYGVFTHRHQPEIAAHLGAEVIFTPHLGNFPRGILETITCRLKAGVTHAQVADVLQKAYGDKPLVRLYDKGVPALKNVVGLPFCDIGFAVQGEHLIVVATEDNLLKGAAAQAVQCANIRFGFAETQSLI.

Residue Cys154 is part of the active site.

Belongs to the NAGSA dehydrogenase family. Type 1 subfamily.

It localises to the cytoplasm. The enzyme catalyses N-acetyl-L-glutamate 5-semialdehyde + phosphate + NADP(+) = N-acetyl-L-glutamyl 5-phosphate + NADPH + H(+). It functions in the pathway amino-acid biosynthesis; L-arginine biosynthesis; N(2)-acetyl-L-ornithine from L-glutamate: step 3/4. Its function is as follows. Catalyzes the NADPH-dependent reduction of N-acetyl-5-glutamyl phosphate to yield N-acetyl-L-glutamate 5-semialdehyde. This Salmonella typhi protein is N-acetyl-gamma-glutamyl-phosphate reductase.